Reading from the N-terminus, the 219-residue chain is Type-5 uracil-DNA glycosylase (219 aa).

Residues C13, C16, C115, and C130 each coordinate [4Fe-4S] cluster.

It belongs to the uracil-DNA glycosylase (UDG) superfamily. Type 5 (UDGb) family.

DNA glycosylase with broad substrate specificity. Can remove uracil from double-stranded DNA containing either a U/G, U/A, U/C or U/T base pair. Can also excise hypoxanthine from double-stranded DNA containing G/I, T/I, and A/I base pairs, xanthine from both double-stranded and single stranded DNA, thymine from G/T mismatched DNA, 5'-hydroxymethyluracil and 5'-fluorouracil. In Thermus thermophilus (strain ATCC 27634 / DSM 579 / HB8), this protein is Type-5 uracil-DNA glycosylase.